Reading from the N-terminus, the 250-residue chain is Bacteriorhodopsin (250 aa).

The Extracellular portion of the chain corresponds to 1 to 18 (MCCAALAPPMAATVGPES). A helical membrane pass occupies residues 19 to 37 (IWLWIGTIGMTLGTLYFVG). Topologically, residues 38 to 51 (RGRGVRDRKMQEFY) are cytoplasmic. A helical membrane pass occupies residues 52 to 70 (IITIFITTIAAAMYFAMAT). Over 71-86 (GFGVTEVMVGDEALTI) the chain is Extracellular. The chain crosses the membrane as a helical span at residues 87-104 (YWARYADWLFTTPLLLLD). Topologically, residues 105–115 (LSLLAGANRNT) are cytoplasmic. The helical transmembrane segment at 116-135 (IATLIGLDVFMIGTGAIAAL) threads the bilayer. Residues 136 to 142 (SSTPGTR) lie on the Extracellular side of the membrane. Residues 143 to 162 (IAWWAISTGALLALLYVLVG) form a helical membrane-spanning segment. The Cytoplasmic segment spans residues 163-180 (TLSENARNRAPEVASLFG). Residues 181–199 (RLRNLVIALWFLYPVVWIL) traverse the membrane as a helical segment. The Extracellular portion of the chain corresponds to 200 to 212 (GTEGTFGILPLYW). Residues 213-232 (ETAAFMVLDLSAKVGFGVIL) form a helical membrane-spanning segment. An N6-(retinylidene)lysine modification is found at Lys225. Topologically, residues 233–250 (LQSRSVLERVATPTAAPT) are cytoplasmic.

Belongs to the archaeal/bacterial/fungal opsin family.

It is found in the cell membrane. Its function is as follows. Light-driven proton pump. In Haloterrigena sp. (strain arg-4), this protein is Bacteriorhodopsin (bop).